Reading from the N-terminus, the 205-residue chain is MSNNNNEAQQPVESTNVESQQNVVQSDCPVVNENNDNNNNNNNNNNNNNNNNNNNNNNNNSNNNNNSSNNENNENNENNSCEKSEQEKPKEPEEPVQEEKSKEPCDQQKVKENEPAEEKETEPAAPVEPENPLSNDSAASEKLQEQHQQQNHEPQQTSNGESNEADANESENKKRSIDEAGDIKDGKKRKVETVETSDPAQQVEA.

Residues 1-25 are compositionally biased toward polar residues; the sequence is MSNNNNEAQQPVESTNVESQQNVVQ. The segment at 1-205 is disordered; the sequence is MSNNNNEAQQ…TSDPAQQVEA (205 aa). Residues 32 to 79 are compositionally biased toward low complexity; it reads NENNDNNNNNNNNNNNNNNNNNNNNNNNNSNNNNNSSNNENNENNENN. The span at 80 to 122 shows a compositional bias: basic and acidic residues; sequence SCEKSEQEKPKEPEEPVQEEKSKEPCDQQKVKENEPAEEKETE. 2 stretches are compositionally biased toward low complexity: residues 123–132 and 146–162; these read PAAPVEPENP and QHQQQNHEPQQTSNGES. Positions 170–185 are enriched in basic and acidic residues; it reads SENKKRSIDEAGDIKD. Residues 194–205 are compositionally biased toward polar residues; it reads VETSDPAQQVEA.

This is an uncharacterized protein from Dictyostelium discoideum (Social amoeba).